A 357-amino-acid polypeptide reads, in one-letter code: Probable dual-specificity RNA methyltransferase RlmN (357 aa).

The active-site Proton acceptor is the Glu-95. The Radical SAM core domain maps to 106–340 (NRDRHTVCVS…VSVREEKGTD (235 aa)). A disulfide bond links Cys-113 and Cys-345. Residues Cys-120, Cys-124, and Cys-127 each coordinate [4Fe-4S] cluster. S-adenosyl-L-methionine-binding positions include 172 to 173 (GE), Ser-204, 227 to 229 (SLH), and Asn-302. The active-site S-methylcysteine intermediate is Cys-345.

This sequence belongs to the radical SAM superfamily. RlmN family. The cofactor is [4Fe-4S] cluster.

It is found in the cytoplasm. It catalyses the reaction adenosine(2503) in 23S rRNA + 2 reduced [2Fe-2S]-[ferredoxin] + 2 S-adenosyl-L-methionine = 2-methyladenosine(2503) in 23S rRNA + 5'-deoxyadenosine + L-methionine + 2 oxidized [2Fe-2S]-[ferredoxin] + S-adenosyl-L-homocysteine. The catalysed reaction is adenosine(37) in tRNA + 2 reduced [2Fe-2S]-[ferredoxin] + 2 S-adenosyl-L-methionine = 2-methyladenosine(37) in tRNA + 5'-deoxyadenosine + L-methionine + 2 oxidized [2Fe-2S]-[ferredoxin] + S-adenosyl-L-homocysteine. Functionally, specifically methylates position 2 of adenine 2503 in 23S rRNA and position 2 of adenine 37 in tRNAs. This chain is Probable dual-specificity RNA methyltransferase RlmN, found in Desulfitobacterium hafniense (strain Y51).